The sequence spans 172 residues: Adenylate kinase isoenzyme 6 (172 aa).

Residues Gly-13, Gly-15, Lys-16, Thr-17, and Thr-18 each coordinate ATP. The tract at residues 33-56 (NVGDLAREGQLYDGYDEEYDCPIL) is NMPbind. The segment at 108 to 118 (NRGYNEKKLKD) is LID. ATP is bound by residues Arg-109 and Lys-148.

The protein belongs to the adenylate kinase family. AK6 subfamily. As to quaternary structure, monomer and homodimer. Interacts with small ribosomal subunit protein uS11. Not a structural component of 43S pre-ribosomes, but transiently interacts with them by binding to uS11. Interacts with COIL (via C-terminus).

The protein localises to the cytoplasm. It localises to the nucleus. Its subcellular location is the nucleoplasm. The protein resides in the cajal body. It carries out the reaction AMP + ATP = 2 ADP. The catalysed reaction is ATP + H2O = ADP + phosphate + H(+). Functionally, broad-specificity nucleoside monophosphate (NMP) kinase that catalyzes the reversible transfer of the terminal phosphate group between nucleoside triphosphates and monophosphates. Also has ATPase activity. Involved in the late cytoplasmic maturation steps of the 40S ribosomal particles, specifically 18S rRNA maturation. While NMP activity is not required for ribosome maturation, ATPase activity is. Associates transiently with small ribosomal subunit protein uS11. ATP hydrolysis breaks the interaction with uS11. May temporarily remove uS11 from the ribosome to enable a conformational change of the ribosomal RNA that is needed for the final maturation step of the small ribosomal subunit. Its NMP activity may have a role in nuclear energy homeostasis. May be involved in regulation of Cajal body (CB) formation. The polypeptide is Adenylate kinase isoenzyme 6 (Bos taurus (Bovine)).